A 102-amino-acid chain; its full sequence is Small ribosomal subunit protein eS24 (102 aa).

Belongs to the eukaryotic ribosomal protein eS24 family.

The protein is Small ribosomal subunit protein eS24 of Methanococcoides burtonii (strain DSM 6242 / NBRC 107633 / OCM 468 / ACE-M).